We begin with the raw amino-acid sequence, 161 residues long: Blue copper protein 1a (161 aa).

An N-terminal signal peptide occupies residues 1-23 (MASSRVVLILSISMVLLSSVAIA). The 101-residue stretch at 24-124 (TDHIVGDDKG…QMKLVITVLA (101 aa)) folds into the Phytocyanin domain. His-64 is a Cu cation binding site. N-linked (GlcNAc...) asparagine glycosylation occurs at Asn-70. The cysteines at positions 77 and 111 are disulfide-linked. Residues Cys-105, His-110, and Met-116 each contribute to the Cu cation site. Residues 141 to 161 (VVSSLFGVVMAIMVAIAVIFA) traverse the membrane as a helical segment.

It localises to the membrane. The sequence is that of Blue copper protein 1a from Medicago truncatula (Barrel medic).